A 554-amino-acid polypeptide reads, in one-letter code: Tetratricopeptide repeat protein 34 (554 aa).

8 TPR repeats span residues 38-71, 166-199, 200-233, 294-327, 328-361, 411-445, 452-485, and 500-533; these read ETSC…RPQA, SESL…EPGN, VKAL…DPGT, PSWR…TPSS, EAAQ…DTQD, NPYH…PAED, SEDF…APAQ, and ASVF…DPSH.

The sequence is that of Tetratricopeptide repeat protein 34 (Ttc34) from Mus musculus (Mouse).